The following is a 262-amino-acid chain: Type III pantothenate kinase (262 aa).

6 to 13 (DVGNTNAV) is a binding site for ATP. Residues Y100 and 107–110 (GADR) each bind substrate. D109 acts as the Proton acceptor in catalysis. Residue D129 participates in K(+) binding. An ATP-binding site is contributed by T132. Substrate is bound at residue T184.

Belongs to the type III pantothenate kinase family. Homodimer. Requires NH4(+) as cofactor. The cofactor is K(+).

The protein localises to the cytoplasm. The enzyme catalyses (R)-pantothenate + ATP = (R)-4'-phosphopantothenate + ADP + H(+). The protein operates within cofactor biosynthesis; coenzyme A biosynthesis; CoA from (R)-pantothenate: step 1/5. Functionally, catalyzes the phosphorylation of pantothenate (Pan), the first step in CoA biosynthesis. The polypeptide is Type III pantothenate kinase (Bacillus anthracis (strain A0248)).